The chain runs to 1454 residues: Coiled-coil domain-containing protein 18 (1454 aa).

Ser45 is modified (phosphoserine). Coiled-coil stretches lie at residues 107 to 138 (APVD…HSLM), 170 to 402 (ILEE…ISQL), 438 to 464 (KLVI…NLTA), and 508 to 1309 (TMNK…SGHE). The interval 828–851 (QKQRESSAEKLRKMEEKCESAAHE) is disordered. Phosphoserine is present on Ser1355.

It localises to the cytoplasm. Its subcellular location is the cytoskeleton. The protein resides in the microtubule organizing center. The protein localises to the centrosome. It is found in the centriolar satellite. The sequence is that of Coiled-coil domain-containing protein 18 (CCDC18) from Homo sapiens (Human).